A 363-amino-acid polypeptide reads, in one-letter code: Chorismate synthase (363 aa).

Positions 48 and 54 each coordinate NADP(+). Residues 125-127 (RSS), 238-239 (NA), G278, 293-297 (KPTSS), and R319 each bind FMN.

It belongs to the chorismate synthase family. In terms of assembly, homotetramer. FMNH2 serves as cofactor.

It carries out the reaction 5-O-(1-carboxyvinyl)-3-phosphoshikimate = chorismate + phosphate. It participates in metabolic intermediate biosynthesis; chorismate biosynthesis; chorismate from D-erythrose 4-phosphate and phosphoenolpyruvate: step 7/7. Its function is as follows. Catalyzes the anti-1,4-elimination of the C-3 phosphate and the C-6 proR hydrogen from 5-enolpyruvylshikimate-3-phosphate (EPSP) to yield chorismate, which is the branch point compound that serves as the starting substrate for the three terminal pathways of aromatic amino acid biosynthesis. This reaction introduces a second double bond into the aromatic ring system. This is Chorismate synthase from Acidithiobacillus ferrooxidans (strain ATCC 23270 / DSM 14882 / CIP 104768 / NCIMB 8455) (Ferrobacillus ferrooxidans (strain ATCC 23270)).